Reading from the N-terminus, the 941-residue chain is Replicative DNA helicase DnaB (941 aa).

The interval 1–25 (MAEFEERPRLSIGEEEAPPYPLEKL) is disordered. Residues 214–484 (RPGGITGVPS…PVYRLTTRLG (271 aa)) enclose the SF4 helicase; first part domain. 245–252 (ARPSMGKT) provides a ligand contact to ATP. The region spanning 534–683 (LLGHLIGDGC…VQSLLLRLGI (150 aa)) is the DOD-type homing endonuclease domain. One can recognise an SF4 helicase; second part domain in the interval 646 to 915 (DGCIQMRRGK…ARFENLTMYQ (270 aa)). Positions 914 to 941 (YQPEPGTPLPETPDETILPSGPPDEAPF) are disordered.

It belongs to the helicase family. DnaB subfamily. As to quaternary structure, homohexamer. Upon expression in E.coli this protein undergoes self splicing that involves a post-translational excision of the intervening region (intein) followed by peptide ligation.

It carries out the reaction Couples ATP hydrolysis with the unwinding of duplex DNA at the replication fork by translocating in the 5'-3' direction. This creates two antiparallel DNA single strands (ssDNA). The leading ssDNA polymer is the template for DNA polymerase III holoenzyme which synthesizes a continuous strand.. It catalyses the reaction ATP + H2O = ADP + phosphate + H(+). Its function is as follows. The main replicative DNA helicase, it participates in initiation and elongation during chromosome replication. Travels ahead of the DNA replisome, separating dsDNA into templates for DNA synthesis. A processive ATP-dependent 5'-3' DNA helicase it has DNA-dependent ATPase activity. The intein is an endonuclease. The chain is Replicative DNA helicase DnaB from Rhodothermus marinus (Rhodothermus obamensis).